A 298-amino-acid chain; its full sequence is Protease HtpX homolog (298 aa).

The next 2 helical transmembrane spans lie at 5–25 and 45–65; these read IFLFILTNILVLTTIGIVLSV and MALLVFSLVVGFVGSFTSLAI. His155 contacts Zn(2+). Residue Glu156 is part of the active site. His159 serves as a coordination point for Zn(2+). The next 2 membrane-spanning stretches (helical) occupy residues 170 to 190 and 204 to 224; these read LLQGIVNTFVVFLSRIAAWIA and FIAMIIFQIVFSILGSLVVFA. Glu230 lines the Zn(2+) pocket.

This sequence belongs to the peptidase M48B family. Zn(2+) is required as a cofactor.

The protein resides in the cell membrane. In Bacillus subtilis (strain 168), this protein is Protease HtpX homolog.